We begin with the raw amino-acid sequence, 351 residues long: SKP1-like protein 21 (351 aa).

The interval 108–167 (TSAADSLQLKPLVDLTSRALARIIEGKTPEEIREIFHLPDDLTEEEKLEPLKNTMDDPRI) is interaction with the F-box domain of F-box proteins. Disordered regions lie at residues 216–240 (VKTSKSKKKNKKRKEQKNGSSNGTC) and 330–351 (VNFSINGNGTSRRLTGPAAGHK). Basic residues predominate over residues 217–230 (KTSKSKKKNKKRKE). Positions 330 to 342 (VNFSINGNGTSRR) are enriched in polar residues.

The protein belongs to the SKP1 family. Part of a SCF (SKP1-cullin-F-box) protein ligase complex. In terms of tissue distribution, expressed in young seedlings, roots, leaves, floral stems, inflorescences, and siliques.

Its subcellular location is the nucleus. It participates in protein modification; protein ubiquitination. Involved in ubiquitination and subsequent proteasomal degradation of target proteins. Together with CUL1, RBX1 and a F-box protein, it forms a SCF E3 ubiquitin ligase complex. The functional specificity of this complex depends on the type of F-box protein. In the SCF complex, it serves as an adapter that links the F-box protein to CUL1. In Arabidopsis thaliana (Mouse-ear cress), this protein is SKP1-like protein 21 (ASK21).